The primary structure comprises 398 residues: ATP-dependent RNA helicase eIF4A (398 aa).

The Q motif motif lies at 25 to 53 (DSFDSMELKPELLRGVYAYGFERPSAIQQ). The Helicase ATP-binding domain occupies 56–226 (ILPIVKGNDV…TKFMRDPVRI (171 aa)). Position 69-76 (69-76 (AQSGTGKT)) interacts with ATP. Positions 174–177 (DEAD) match the DEAD box motif. Residues 237–398 (GIKQFYIAVE…EMPMNVADLI (162 aa)) enclose the Helicase C-terminal domain.

It belongs to the DEAD box helicase family. eIF4A subfamily. In terms of assembly, component of the eIF4F complex, which composition varies with external and internal environmental conditions. It is composed of at least eIF4A, eIF4E and eIF4G.

It localises to the cytoplasm. The enzyme catalyses ATP + H2O = ADP + phosphate + H(+). Its function is as follows. ATP-dependent RNA helicase which is a subunit of the eIF4F complex involved in cap recognition and is required for mRNA binding to ribosome. In the current model of translation initiation, eIF4A unwinds RNA secondary structures in the 5'-UTR of mRNAs which is necessary to allow efficient binding of the small ribosomal subunit, and subsequent scanning for the initiator codon. In Emericella nidulans (strain FGSC A4 / ATCC 38163 / CBS 112.46 / NRRL 194 / M139) (Aspergillus nidulans), this protein is ATP-dependent RNA helicase eIF4A (tif1).